The following is a 548-amino-acid chain: Membrane protein insertase YidC (548 aa).

Transmembrane regions (helical) follow at residues 6 to 26 (NLIL…WESD), 357 to 377 (NWGV…FPLT), 424 to 444 (LGGC…YWAL), 455 to 475 (FALW…PILM), and 503 to 523 (PIIF…YWLV).

This sequence belongs to the OXA1/ALB3/YidC family. Type 1 subfamily. Interacts with the Sec translocase complex via SecD. Specifically interacts with transmembrane segments of nascent integral membrane proteins during membrane integration.

It is found in the cell inner membrane. Required for the insertion and/or proper folding and/or complex formation of integral membrane proteins into the membrane. Involved in integration of membrane proteins that insert both dependently and independently of the Sec translocase complex, as well as at least some lipoproteins. Aids folding of multispanning membrane proteins. The sequence is that of Membrane protein insertase YidC from Aeromonas hydrophila subsp. hydrophila (strain ATCC 7966 / DSM 30187 / BCRC 13018 / CCUG 14551 / JCM 1027 / KCTC 2358 / NCIMB 9240 / NCTC 8049).